The sequence spans 1661 residues: ATP-dependent bile acid permease (1661 aa).

The Lumenal portion of the chain corresponds to 1 to 33 (MHHVLNSTRPDHRFWFYDDVTQYGRTKYLNYYT). Residue Asn6 is glycosylated (N-linked (GlcNAc...) asparagine). Residues 34–54 (PLVLLIFTVLFITYNIWKHYY) form a helical membrane-spanning segment. Residues 55–74 (YYDVLHLKQKNPIDELLYSS) are Cytoplasmic-facing. The chain crosses the membrane as a helical span at residues 75 to 95 (TDEDEQSPLINNNTITTNYVD). At 96 to 133 (NNCTKDALKNRHFSLEKLKSVKVNGEPHGTPEIVRRGF) the chain is on the lumenal side. N-linked (GlcNAc...) asparagine glycosylation is present at Asn97. A helical transmembrane segment spans residues 134–154 (IEKSRIILEFFLVLSQVIIHS). The Cytoplasmic portion of the chain corresponds to 155-166 (FILLHYVNKNPE). A helical transmembrane segment spans residues 167-187 (FTQQGTITGLVEWCALFIIVS). Topologically, residues 188 to 205 (LRLANVNQNFKFINKYPG) are lumenal. Residues 206–226 (NLWSVSFINYLALFISMILPF) form a helical membrane-spanning segment. The Cytoplasmic portion of the chain corresponds to 227-345 (RSIFIHHINS…VKRKRIFSLN (119 aa)). The helical transmembrane segment at 346–366 (LFFFFSNYLVLQCFWAFLGSV) threads the bilayer. One can recognise an ABC transmembrane type-1 1 domain in the interval 354-662 (LVLQCFWAFL…LSDMLSFVVQ (309 aa)). Residues 367–393 (LSFIPTVLLKRILEYVEDQSSAPSNLA) lie on the Lumenal side of the membrane. Residues 394 to 414 (WFYVTVMFVGRILVAICQAQA) form a helical membrane-spanning segment. At 415 to 495 (LFFGRRVCIR…AFKVSEICGY (81 aa)) the chain is on the cytoplasmic side. Positions 445 to 468 (NKTKPSNEDPQEINDQKSINGDEE) are disordered. A helical membrane pass occupies residues 496–516 (LHSFLEAFVMTVVALALLYRL). The Lumenal segment spans residues 517-519 (LGF). A helical membrane pass occupies residues 520–540 (AAIVGVLIIVAMLPLNYKLAK). Residues 541–602 (YIGDLQKKNL…LLLMRSIVWS (62 aa)) are Cytoplasmic-facing. A helical transmembrane segment spans residues 603–623 (ISSFLWFVTPTIVTAASFAYY). Residues 624 to 644 (IYVQGEVLTTPVAFTALSLFT) lie on the Lumenal side of the membrane. Residues 645-665 (LLRDPLDRLSDMLSFVVQSKV) form a helical membrane-spanning segment. Residues 666 to 1053 (SLDRVQDFLN…SWWVRAWASH (388 aa)) are Cytoplasmic-facing. In terms of domain architecture, ABC transporter 1 spans 694 to 935 (FAFENSTISW…GLFGEDELVK (242 aa)). An ATP-binding site is contributed by 729-736 (GPTGSGKT). Phosphoserine is present on residues Ser936, Ser940, and Ser955. An ABC transmembrane type-1 2 domain is found at 1026–1345 (VSFLASLFLI…LVRLYSEVEM (320 aa)). The helical transmembrane segment at 1054–1074 (NVIAKIIPRAQRAIAFISKKA) threads the bilayer. Residues 1075–1114 (SHLIDWRGSSQISMASAENQPSSGHSTMYYLVLYLIIGFA) lie on the Lumenal side of the membrane. The chain crosses the membrane as a helical span at residues 1115-1135 (QALLGAGKTILNFVAGINASR). At 1136-1178 (KIFNMILNKVLHSKIRFFDATPTGRIMNRFSKDIEAIDQELTP) the chain is on the cytoplasmic side. A helical transmembrane segment spans residues 1179–1199 (YIQGAFYSLIECLSTVILITF). Position 1200 (Ile1200) is a topological domain, lumenal. A helical membrane pass occupies residues 1201 to 1221 (TPQFLSVAIVVSILYYFVGYF). The Cytoplasmic portion of the chain corresponds to 1222-1292 (YMAGSRELKR…VANRWLAFRI (71 aa)). A helical membrane pass occupies residues 1293 to 1313 (DMIGSLVIFGAGLFILFNINN). The Lumenal portion of the chain corresponds to 1314–1315 (LD). The helical transmembrane segment at 1316–1336 (SGMAGISLTYAISFTEGALWL) threads the bilayer. Over 1337–1661 (VRLYSEVEMN…FVEKLNSKKD (325 aa)) the chain is Cytoplasmic. In terms of domain architecture, ABC transporter 2 spans 1381 to 1636 (IEVNDLSLRY…KQSAFYSMCE (256 aa)). Residue 1415–1422 (GRTGAGKS) participates in ATP binding.

Belongs to the ABC transporter superfamily. ABCC family. Conjugate transporter (TC 3.A.1.208) subfamily.

The protein localises to the vacuole membrane. Vacuolar class C ABC transporter which regulates the translocation of phosphatidylcholine to the vacuole lumen, the release of lumenal calcium stores, and acts as a negative regulator of vacuole fusion. Exhibits ATP-dependent bile acid transport. In Saccharomyces cerevisiae (strain ATCC 204508 / S288c) (Baker's yeast), this protein is ATP-dependent bile acid permease (YBT1).